A 90-amino-acid chain; its full sequence is Probable Fe(2+)-trafficking protein (90 aa).

Belongs to the Fe(2+)-trafficking protein family.

Could be a mediator in iron transactions between iron acquisition and iron-requiring processes, such as synthesis and/or repair of Fe-S clusters in biosynthetic enzymes. This chain is Probable Fe(2+)-trafficking protein, found in Nitrosomonas eutropha (strain DSM 101675 / C91 / Nm57).